The primary structure comprises 23 residues: Pseudin-3 (23 aa).

Expressed by the skin glands.

The protein resides in the secreted. In terms of biological role, possesses antifungal activity against C.albicans and is also active against E.coli and S.aureus. The protein is Pseudin-3 of Pseudis paradoxa (Paradoxical frog).